We begin with the raw amino-acid sequence, 177 residues long: ATP-dependent protease subunit HslV (177 aa).

The active site involves Thr2. 3 residues coordinate Na(+): Gly158, Cys161, and Thr164.

Belongs to the peptidase T1B family. HslV subfamily. A double ring-shaped homohexamer of HslV is capped on each side by a ring-shaped HslU homohexamer. The assembly of the HslU/HslV complex is dependent on binding of ATP.

The protein resides in the cytoplasm. It carries out the reaction ATP-dependent cleavage of peptide bonds with broad specificity.. Allosterically activated by HslU binding. Functionally, protease subunit of a proteasome-like degradation complex believed to be a general protein degrading machinery. In Pseudomonas aeruginosa (strain LESB58), this protein is ATP-dependent protease subunit HslV.